Reading from the N-terminus, the 173-residue chain is Small ribosomal subunit protein uS11m (173 aa).

The protein belongs to the universal ribosomal protein uS11 family.

The protein localises to the mitochondrion. This is Small ribosomal subunit protein uS11m (RPS11) from Acanthamoeba castellanii (Amoeba).